A 118-amino-acid chain; its full sequence is Holin-like protein CidA 2 (118 aa).

4 helical membrane-spanning segments follow: residues 4-26 (VTLL…IQGV), 33-52 (GSLI…VLPL), 62-84 (LIVF…GSFL), and 91-113 (IFLL…SQLL).

This sequence belongs to the CidA/LrgA family. CidA subfamily.

The protein resides in the cell membrane. Its function is as follows. Increases the activity of extracellular murein hydrolases possibly by mediating their export via hole formation. Inhibited by the antiholin-like proteins LrgAB. In an unstressed cell, the LrgAB products probably inhibit the function of the CidA protein. When a cell is stressed by the addition of antibiotics or by other factors in the environment, CidA possibly oligomerizes within the bacterial cell membrane, creating lesions that disrupt the proton motive force, which in turn results in loss of cell viability. These lesions are also hypothesized to regulate the subsequent cell lysis by either allowing the murein hydrolases access to the cell wall substrate and/or regulating their activity by a possible change in the cell wall pH that results from loss of membrane potential. This Bacillus cereus (strain ATCC 14579 / DSM 31 / CCUG 7414 / JCM 2152 / NBRC 15305 / NCIMB 9373 / NCTC 2599 / NRRL B-3711) protein is Holin-like protein CidA 2 (cidA2).